The chain runs to 840 residues: Probable alpha-glucuronidase A (840 aa).

Positions 1–19 (MWSGIPIFALLSSIGIAAA) are cleaved as a signal peptide. N-linked (GlcNAc...) asparagine glycosylation is found at Asn50, Asn149, Asn222, Asn262, Asn279, Asn310, Asn465, Asn527, Asn576, Asn610, Asn682, Asn723, and Asn732.

This sequence belongs to the glycosyl hydrolase 67 family.

Its subcellular location is the secreted. It catalyses the reaction an alpha-D-glucuronoside + H2O = D-glucuronate + an alcohol. Alpha-glucuronidase involved in the hydrolysis of xylan, a major structural heterogeneous polysaccharide found in plant biomass representing the second most abundant polysaccharide in the biosphere, after cellulose. Releases 4-O-methylglucuronic acid from xylan. The polypeptide is Probable alpha-glucuronidase A (aguA) (Aspergillus fumigatus (strain ATCC MYA-4609 / CBS 101355 / FGSC A1100 / Af293) (Neosartorya fumigata)).